A 437-amino-acid chain; its full sequence is Histidine--tRNA ligase (437 aa).

It belongs to the class-II aminoacyl-tRNA synthetase family. Homodimer.

It is found in the cytoplasm. It catalyses the reaction tRNA(His) + L-histidine + ATP = L-histidyl-tRNA(His) + AMP + diphosphate + H(+). In Leptospira biflexa serovar Patoc (strain Patoc 1 / Ames), this protein is Histidine--tRNA ligase.